The chain runs to 385 residues: Glutamate 5-kinase (385 aa).

Lys17 lines the ATP pocket. Positions 64, 151, and 165 each coordinate substrate. Residue 185–186 (SD) coordinates ATP. In terms of domain architecture, PUA spans 291–367 (SGTVRVDAGA…DQIENVLGYS (77 aa)).

Belongs to the glutamate 5-kinase family.

Its subcellular location is the cytoplasm. The catalysed reaction is L-glutamate + ATP = L-glutamyl 5-phosphate + ADP. It functions in the pathway amino-acid biosynthesis; L-proline biosynthesis; L-glutamate 5-semialdehyde from L-glutamate: step 1/2. Functionally, catalyzes the transfer of a phosphate group to glutamate to form L-glutamate 5-phosphate. This chain is Glutamate 5-kinase, found in Methanosarcina mazei (strain ATCC BAA-159 / DSM 3647 / Goe1 / Go1 / JCM 11833 / OCM 88) (Methanosarcina frisia).